We begin with the raw amino-acid sequence, 229 residues long: uncharacterized protein (229 aa).

It to M.pneumoniae MPN_376 central region.

This is an uncharacterized protein from Mycoplasma pneumoniae (strain ATCC 29342 / M129 / Subtype 1) (Mycoplasmoides pneumoniae).